Here is a 2254-residue protein sequence, read N- to C-terminus: Voltage-dependent T-type calcium channel subunit alpha-1G (2254 aa).

The tract at residues 1–48 (MDEEEDGAGAEESGQPRSFTQLNDLSGAGGRQGPGSTEKDPGSADSEA) is disordered. Topologically, residues 1–80 (MDEEEDGAGA…RSWCLRTVCN (80 aa)) are cytoplasmic. Residues 15 to 24 (QPRSFTQLND) show a composition bias toward polar residues. Residues 68–398 (SRPRSWCLRT…LCLVVIATQF (331 aa)) form an I repeat. The helical transmembrane segment at 81–101 (PWFERVSMLVILLNCVTLGMF) threads the bilayer. Over 102–119 (RPCEDIACDSQRCRILQA) the chain is Extracellular. A helical transmembrane segment spans residues 120-141 (FDDFIFAFFAVEMVVKMVALGI). Residues 142-150 (FGKKCYLGD) are Cytoplasmic-facing. The chain crosses the membrane as a helical span at residues 151–170 (TWNRLDFFIVIAGMLEYSLD). At 171 to 175 (LQNVS) the chain is on the extracellular side. N-linked (GlcNAc...) asparagine glycosylation occurs at N173. Residues 176 to 193 (FSAVRTVRVLRPLRAINR) traverse the membrane as a helical segment. Over 194–213 (VPSMRILVTLLLDTLPMLGN) the chain is Cytoplasmic. Residues 214-234 (VLLLCFFVFFIFGIVGVQLWA) traverse the membrane as a helical segment. Residues 235–370 (GLLRNRCFLP…YFVMDAHSFY (136 aa)) lie on the Extracellular side of the membrane. 4 N-linked (GlcNAc...) asparagine glycosylation sites follow: N246, N306, N310, and N322. Residues 371 to 395 (NFIYFILLIIVGSFFMINLCLVVIA) traverse the membrane as a helical segment. Residues 396-744 (TQFSETKQRE…DTFRKIVDSK (349 aa)) are Cytoplasmic-facing. S467 is modified (phosphoserine). Over residues 494-506 (LVHHHHHHHHHYH) the composition is skewed to basic residues. Disordered stretches follow at residues 494–513 (LVHH…GTLR), 525–553 (DANG…AESV), 579–598 (ASGR…TSPP), and 699–721 (DAQH…GPDA). A compositionally biased stretch (pro residues) spans 534–545 (LPPPSTPTPSGG). S716 carries the post-translational modification Phosphoserine. An II repeat occupies 730-968 (WRLICDTFRK…LLVAILVEGF (239 aa)). The helical transmembrane segment at 745–765 (YFGRGIMIAILVNTLSMGIEY) threads the bilayer. Residues 766-778 (HEQPEELTNALEI) lie on the Extracellular side of the membrane. Residues 779–800 (SNIVFTSLFALEMLLKLLVYGP) form a helical membrane-spanning segment. Topologically, residues 801 to 806 (FGYIKN) are cytoplasmic. The helical transmembrane segment at 807–825 (PYNIFDGVIVVISVWEIVG) threads the bilayer. The Extracellular segment spans residues 826-833 (QQGGGLSV). A helical transmembrane segment spans residues 834 to 857 (LRTFRLMRVLKLVRFLPALQRQLV). The Cytoplasmic segment spans residues 858–868 (VLMKTMDNVAT). The helical transmembrane segment at 869 to 889 (FCMLLMLFIFIFSILGMHLFG) threads the bilayer. Residues 890 to 940 (CKFASERDGDTLPDRKNFDSLLWAIVTVFQILTQEDWNKVLYNGMASTSSW) lie on the Extracellular side of the membrane. Residues 941–965 (AALYFIALMTFGNYVLFNLLVAILV) traverse the membrane as a helical segment. Topologically, residues 966-1251 (EGFQAEGDAT…SRFRLLCHRI (286 aa)) are cytoplasmic. The interval 1024-1209 (TPMSHPKSSS…GDDDNDEGNL (186 aa)) is disordered. Composition is skewed to low complexity over residues 1041–1052 (GSGSRRTSSSGS) and 1065–1091 (PPSA…SRNS). Acidic residues-rich tracts occupy residues 1117-1126 (ESQDEEESSE) and 1196-1206 (PQLDGDDDNDE). Phosphoserine is present on residues S1118, S1124, and S1125. One copy of the III repeat lies at 1242–1519 (SRFRLLCHRI…MFVGVVVENF (278 aa)). The chain crosses the membrane as a helical span at residues 1252–1274 (ITHKMFDHVVLVIIFLNCITIAM). The Extracellular segment spans residues 1275 to 1292 (ERPKIDPHSAERIFLTLS). The helical transmembrane segment at 1293–1313 (NYIFTAVFLAEMTVKVVALGW) threads the bilayer. The Cytoplasmic segment spans residues 1314 to 1323 (CFGEQAYLRS). The chain crosses the membrane as a helical span at residues 1324–1343 (SWNVLDGLLVLISVIDILVS). At 1344–1357 (MVSDSGTKILGMLR) the chain is on the extracellular side. A helical membrane pass occupies residues 1358–1379 (VLRLLRTLRPLRVISRAQGLKL). The Cytoplasmic segment spans residues 1380-1389 (VVETLMSSLK). The helical transmembrane segment at 1390–1413 (PIGNIVVICCAFFIIFGILGVQLF) threads the bilayer. Over 1414–1490 (KGKFFVCQGE…DQQPIMNHNP (77 aa)) the chain is Extracellular. N-linked (GlcNAc...) asparagine glycans are attached at residues N1427 and N1430. Residues 1491-1516 (WMLLYFISFLLIVAFFVLNMFVGVVV) form a helical membrane-spanning segment. Residues 1517–1578 (ENFHKCRQHQ…RLLVHHLCTS (62 aa)) are Cytoplasmic-facing. An IV repeat occupies 1564–1822 (DYSRFRLLVH…VVIAVLMKHL (259 aa)). The helical transmembrane segment at 1579 to 1599 (HYLDLFITGVIGLNVVTMAME) threads the bilayer. Over 1600-1613 (HYQQPQILDEALKI) the chain is Extracellular. Residues 1614-1635 (CNYIFTVIFVFESVFKLVAFGF) form a helical membrane-spanning segment. The Cytoplasmic portion of the chain corresponds to 1636–1642 (RRFFQDR). The helical transmembrane segment at 1643-1661 (WNQLDLAIVLLSIMGITLE) threads the bilayer. The Extracellular segment spans residues 1662–1675 (EIEVNLSLPINPTI). N1666 carries an N-linked (GlcNAc...) asparagine glycan. Residues 1676 to 1699 (IRIMRVLRIARVLKLLKMAVGMRA) form a helical membrane-spanning segment. Over 1700–1713 (LLHTVMQALPQVGN) the chain is Cytoplasmic. The chain crosses the membrane as a helical span at residues 1714 to 1734 (LGLLFMLLFFIFAALGVELFG). Residues 1735 to 1794 (DLECDETHPCEGLGRHATFRNFGMAFLTLFRVSTGDNWNGIMKDTLRDCDQESTCYNTVI) lie on the Extracellular side of the membrane. The helical transmembrane segment at 1795 to 1822 (SPIYFVSFVLTAQFVLVNVVIAVLMKHL) threads the bilayer. Residues 1823–2254 (EESNKEAKEE…LSSDPTDMDP (432 aa)) are Cytoplasmic-facing. Positions 2153–2254 (DSGSQPRLCP…LSSDPTDMDP (102 aa)) are disordered. A compositionally biased stretch (low complexity) spans 2184–2193 (SPPSISIDPP). 2 stretches are compositionally biased toward polar residues: residues 2220–2232 (PSVS…TAAS) and 2240–2254 (LSLS…DMDP).

It belongs to the calcium channel alpha-1 subunit (TC 1.A.1.11) family. CACNA1G subfamily. In terms of processing, in response to raising of intracellular calcium, the T-type channels are activated by CaM-kinase II. As to expression, highly expressed in brain. Moderate expression in heart; low expression in placenta, kidney and lung.

The protein resides in the cell membrane. The protein localises to the cytoplasm. The catalysed reaction is Ca(2+)(in) = Ca(2+)(out). In terms of biological role, voltage-sensitive calcium channels (VSCC) mediate the entry of calcium ions into excitable cells and are also involved in a variety of calcium-dependent processes, including muscle contraction, hormone or neurotransmitter release, gene expression, cell motility, cell division and cell death. The isoform alpha-1G gives rise to T-type calcium currents. T-type calcium channels belong to the 'low-voltage activated (LVA)' group and are strongly blocked by nickel and mibefradil. A particularity of this type of channels is an opening at quite negative potentials and a voltage-dependent inactivation. T-type channels serve pacemaking functions in both central neurons and cardiac nodal cells and support calcium signaling in secretory cells and vascular smooth muscle. They may also be involved in the modulation of firing patterns of neurons which is important for information processing as well as in cell growth processes. In Rattus norvegicus (Rat), this protein is Voltage-dependent T-type calcium channel subunit alpha-1G (Cacna1g).